The chain runs to 454 residues: GA-binding protein alpha chain (454 aa).

Positions 168–251 (AALEGYRKEQ…SHLELLRKYV (84 aa)) constitute a PNT domain. Positions 297–316 (QRAPRISGEDRSSPGNRTGN) are disordered. Serine 303 is subject to Phosphoserine. The segment at residues 320–400 (IQLWQFLLEL…QGKRFVYKFV (81 aa)) is a DNA-binding region (ETS).

It belongs to the ETS family. In terms of assembly, heterotetramer of two alpha and two beta subunits.

The protein localises to the nucleus. Functionally, transcription factor capable of interacting with purine rich repeats (GA repeats). Positively regulates transcription of transcriptional repressor RHIT/ZNF205. (Microbial infection) Necessary for the expression of the Adenovirus E4 gene. The chain is GA-binding protein alpha chain (GABPA) from Homo sapiens (Human).